An 80-amino-acid chain; its full sequence is Ubiquitin-like protein NEDD8-like protein 2 (80 aa).

This sequence belongs to the ubiquitin family.

The protein is Ubiquitin-like protein NEDD8-like protein 2 (nedd8l2) of Dictyostelium discoideum (Social amoeba).